The chain runs to 269 residues: Chymotrypsin-like elastase family member 2A (269 aa).

The signal sequence occupies residues 1–16 (MIRTLLLSTLVAGALS). A propeptide spans 17–28 (CGDPTYPPYVTR) (activation peptide). Residues 29–267 (VVGGEEARPN…YIDWINSVIA (239 aa)) form the Peptidase S1 domain. The cysteines at positions 58 and 74 are disulfide-linked. Residues histidine 73 and aspartate 121 each act as charge relay system in the active site. Disulfide bonds link cysteine 155–cysteine 222, cysteine 186–cysteine 202, and cysteine 212–cysteine 243. Residue serine 216 is the Charge relay system of the active site.

Belongs to the peptidase S1 family. Elastase subfamily. Interacts with CPA1. Interacts with SERPINA1. In terms of tissue distribution, expressed in pancreas. Not detected in keratinocytes. Detected in exocrine secretions of the pancreas (at protein level). Also expressed in a small fraction of cells in pancreatic islets, adrenal cortex, intestinal glands and colonic lymphoid follicles (at protein level). Detected in plasma.

The protein localises to the secreted. It catalyses the reaction Preferential cleavage: Leu-|-Xaa, Met-|-Xaa and Phe-|-Xaa. Hydrolyzes elastin.. Its function is as follows. Elastase that enhances insulin signaling and might have a physiologic role in cellular glucose metabolism. Circulates in plasma and reduces platelet hyperactivation, triggers both insulin secretion and degradation, and increases insulin sensitivity. In Homo sapiens (Human), this protein is Chymotrypsin-like elastase family member 2A.